We begin with the raw amino-acid sequence, 260 residues long: Thrombin-like enzyme 2 (260 aa).

Residues 1–18 (MMLIRVLANLLILQLSYA) form the signal peptide. Positions 19–24 (QKSSEL) are excised as a propeptide. Residues 25 to 251 (VIGGDECNIN…HLDWIQSIIA (227 aa)) enclose the Peptidase S1 domain. Cystine bridges form between Cys31–Cys165, Cys52–Cys68, Cys102–Cys258, Cys144–Cys212, Cys176–Cys191, and Cys202–Cys227. The Charge relay system role is filled by His67. Asn105 is a glycosylation site (N-linked (GlcNAc...) asparagine). Residue Asp112 is the Charge relay system of the active site. 2 N-linked (GlcNAc...) asparagine glycosylation sites follow: Asn156 and Asn172. Ser206 serves as the catalytic Charge relay system. Asn253 is a glycosylation site (N-linked (GlcNAc...) asparagine).

The protein belongs to the peptidase S1 family. Snake venom subfamily. In terms of assembly, monomer. Expressed by the venom gland.

Its subcellular location is the secreted. Its function is as follows. Thrombin-like snake venom serine protease. This Trimeresurus albolabris (White-lipped pit viper) protein is Thrombin-like enzyme 2.